The primary structure comprises 522 residues: 2-isopropylmalate synthase (522 aa).

The 263-residue stretch at 5-267 (VIIFDTTLRD…DCGINAKEIH (263 aa)) folds into the Pyruvate carboxyltransferase domain. Mn(2+) is bound by residues aspartate 14, histidine 202, histidine 204, and asparagine 238. A regulatory domain region spans residues 392–522 (QLQHMMVHSD…IHKERELGGV (131 aa)).

It belongs to the alpha-IPM synthase/homocitrate synthase family. LeuA type 1 subfamily. As to quaternary structure, homodimer. Mn(2+) is required as a cofactor.

The protein resides in the cytoplasm. It catalyses the reaction 3-methyl-2-oxobutanoate + acetyl-CoA + H2O = (2S)-2-isopropylmalate + CoA + H(+). Its pathway is amino-acid biosynthesis; L-leucine biosynthesis; L-leucine from 3-methyl-2-oxobutanoate: step 1/4. Catalyzes the condensation of the acetyl group of acetyl-CoA with 3-methyl-2-oxobutanoate (2-ketoisovalerate) to form 3-carboxy-3-hydroxy-4-methylpentanoate (2-isopropylmalate). This chain is 2-isopropylmalate synthase, found in Shewanella frigidimarina (strain NCIMB 400).